The primary structure comprises 130 residues: Small ribosomal subunit protein uS9 (130 aa).

Belongs to the universal ribosomal protein uS9 family.

The polypeptide is Small ribosomal subunit protein uS9 (Burkholderia pseudomallei (strain K96243)).